The following is a 511-amino-acid chain: Synaptotagmin-6 (511 aa).

Residues 1–59 (MSGVWGAGGPRCQAALAVLASLCRARPPPLGLDVETCRSFELQSPEQSPSAADSGTSVS) lie on the Vesicular side of the membrane. The tract at residues 12–38 (CQAALAVLASLCRARPPPLGLDVETCR) is cysteine motif. A helical membrane pass occupies residues 60–80 (LLAVVVIVCGVALVAVFLFLF). At 81–511 (WKLCWMPWRK…KSFKEGTPRL (431 aa)) the chain is on the cytoplasmic side. Disordered stretches follow at residues 92–119 (EASS…ADKL) and 157–182 (TKLQ…LPRQ). Positions 94 to 103 (SSPSSANPAS) are enriched in low complexity. 2 stretches are compositionally biased toward polar residues: residues 104–113 (ETLQSPSSRG) and 160–172 (QRQT…STRH). The residue at position 217 (S217) is a Phosphoserine. 2 consecutive C2 domains span residues 230–351 (SCGK…SIWK) and 362–495 (DLGE…AHWH). Residues D261, D267, D319, F320, D321, S324, D327, D393, D399, D453, and D455 each coordinate Ca(2+). The segment at 483–511 (MLAYPRKPIAHWHSLVEVKKSFKEGTPRL) is necessary for cell membrane association (isoform 2).

The protein belongs to the synaptotagmin family. Isoform 1: Homodimer; disulfide-linked via the cysteine motif. Isoform 1: Can also form heterodimers with SYT3, SYT7, SYT9 and SYT10. Isoform 1: Interacts with STX1A, STX1B and STX2; the interaction is Ca(2+)-dependent. Isoform 2: Is not able to form homodimer and heterodimers. Ca(2+) is required as a cofactor. In terms of tissue distribution, isoform 1 is expressed in the olfactory bulb. Isoform 2 is expressed in the brain (at protein level).

The protein resides in the cytoplasmic vesicle. Its subcellular location is the secretory vesicle. It localises to the synaptic vesicle membrane. It is found in the membrane. The protein localises to the cytoplasm. The protein resides in the cytosol. Its subcellular location is the cell membrane. Its function is as follows. May be involved in Ca(2+)-dependent exocytosis of secretory vesicles through Ca(2+) and phospholipid binding to the C2 domain or may serve as Ca(2+) sensors in the process of vesicular trafficking and exocytosis. May mediate Ca(2+)-regulation of exocytosis in acrosomal reaction in sperm. The sequence is that of Synaptotagmin-6 (Syt6) from Mus musculus (Mouse).